Reading from the N-terminus, the 628-residue chain is WW domain-containing adapter protein with coiled-coil (628 aa).

Disordered regions lie at residues 1–130 (MVMY…DDWS), 152–338 (EKPK…PQSP), and 417–532 (NQSP…SARS). Residues 37–49 (SSDHRHDKMRDST) show a composition bias toward basic and acidic residues. Residues 74-84 (GKAKSMHLHRV) are compositionally biased toward basic residues. Low complexity predominate over residues 101–121 (NHSAIHSSNSHSSTPSKTSDS). Positions 123 to 156 (YDPADDWSEHISSSGKKYYYNCRTEVSQWEKPKE) constitute a WW domain. Basic and acidic residues-rich tracts occupy residues 152–168 (EKPK…KETS) and 176–185 (PKDRDYRREA). A compositionally biased stretch (polar residues) spans 199–213 (DTSTMLPQNILSQTS). Positions 214 to 227 (RHNDRDYRLPRTDS) are enriched in basic and acidic residues. 2 stretches are compositionally biased toward low complexity: residues 230 to 260 (SAAP…TVQP) and 299 to 331 (SDKS…TVPV). Polar residues predominate over residues 420–446 (PMSLTSDASSPRSYVSPRISTPQTNTV). Low complexity predominate over residues 467–486 (GSKQGSSAQTASQQSSAADK). The segment covering 511–532 (PNHNSSTCASSTSAPQNSSARS) has biased composition (polar residues). A coiled-coil region spans residues 599–625 (QATLREQRILFLRQQIKELEKLKNQNS).

It localises to the nucleus. Its function is as follows. Acts as a linker between gene transcription and histone H2B monoubiquitination at 'Lys-120' (H2BK120ub1). Positive regulator of amino acid starvation-induced autophagy. Positively regulates MTOR activity. May negatively regulate the ubiquitin proteasome pathway. The polypeptide is WW domain-containing adapter protein with coiled-coil (wac) (Xenopus tropicalis (Western clawed frog)).